A 317-amino-acid polypeptide reads, in one-letter code: Neurogenic differentiation factor 6-B (317 aa).

2 disordered regions span residues 1–90 (MLTV…ERSR) and 297–317 (DLHPRSQSFQSQDELNTGYHN). Positions 37-56 (EAEDDNTDREEEEEREEDEN) are enriched in acidic residues. Residues 59 to 69 (PKKKGPRKKKS) are compositionally biased toward basic residues. The Nuclear localization signal signature appears at 65-70 (RKKKSE). A compositionally biased stretch (basic and acidic residues) spans 70–90 (EGRGDRVKMRRQEANARERSR). The bHLH domain maps to 78–130 (MRRQEANARERSRMHGLNDALESLRKVVPCYSKTQKLSKIETLRLAKNYIWAL). A compositionally biased stretch (polar residues) spans 301–317 (RSQSFQSQDELNTGYHN).

Efficient DNA binding requires dimerization with another bHLH protein. In terms of tissue distribution, embryonic olfactory bulbs and olfactory placodes. In adult, expressed in brain and eye.

It is found in the nucleus. Its function is as follows. Differentiation factor required for neurogenesis. Does not act as an upstream activator of isl1. This chain is Neurogenic differentiation factor 6-B, found in Danio rerio (Zebrafish).